A 339-amino-acid polypeptide reads, in one-letter code: tRNA N6-adenosine threonylcarbamoyltransferase (339 aa).

Fe cation-binding residues include histidine 115 and histidine 119. Residues 136 to 140 (LISGG), aspartate 168, glutamate 185, and serine 265 contribute to the substrate site. Residue aspartate 293 coordinates Fe cation.

The protein belongs to the KAE1 / TsaD family. Fe(2+) is required as a cofactor.

It is found in the cytoplasm. The catalysed reaction is L-threonylcarbamoyladenylate + adenosine(37) in tRNA = N(6)-L-threonylcarbamoyladenosine(37) in tRNA + AMP + H(+). In terms of biological role, required for the formation of a threonylcarbamoyl group on adenosine at position 37 (t(6)A37) in tRNAs that read codons beginning with adenine. Is probably involved in the transfer of the threonylcarbamoyl moiety of threonylcarbamoyl-AMP (TC-AMP) to the N6 group of A37. The sequence is that of tRNA N6-adenosine threonylcarbamoyltransferase from Pyrobaculum calidifontis (strain DSM 21063 / JCM 11548 / VA1).